A 430-amino-acid polypeptide reads, in one-letter code: Probable glucose-6-phosphate isomerase (430 aa).

E271 acts as the Proton donor in catalysis. Residues H292, H303, and K403 contribute to the active site.

The protein belongs to the GPI family.

Its subcellular location is the cytoplasm. The catalysed reaction is alpha-D-glucose 6-phosphate = beta-D-fructose 6-phosphate. Its pathway is carbohydrate biosynthesis; gluconeogenesis. The protein operates within carbohydrate degradation; glycolysis; D-glyceraldehyde 3-phosphate and glycerone phosphate from D-glucose: step 2/4. Functionally, catalyzes the reversible isomerization of glucose-6-phosphate to fructose-6-phosphate. This Haloquadratum walsbyi (strain DSM 16790 / HBSQ001) protein is Probable glucose-6-phosphate isomerase.